The chain runs to 220 residues: Thymidylate kinase (220 aa).

10–17 (GIDGCGKS) provides a ligand contact to ATP.

This sequence belongs to the thymidylate kinase family.

It catalyses the reaction dTMP + ATP = dTDP + ADP. Phosphorylation of dTMP to form dTDP in both de novo and salvage pathways of dTTP synthesis. This is Thymidylate kinase from Prochlorococcus marinus (strain SARG / CCMP1375 / SS120).